The primary structure comprises 347 residues: GMP reductase (347 aa).

Residue 108 to 131 coordinates NADP(+); sequence ADFQKTKDIMALTDDLIFICIDIA. Residues glycine 181 and glycine 183 each contribute to the K(+) site. Cysteine 186 serves as the catalytic Thioimidate intermediate. 216–239 lines the NADP(+) pocket; the sequence is IIGDGGCSCAGDVSKAFGGGADFV.

The protein belongs to the IMPDH/GMPR family. GuaC type 1 subfamily. Homotetramer.

It carries out the reaction IMP + NH4(+) + NADP(+) = GMP + NADPH + 2 H(+). In terms of biological role, catalyzes the irreversible NADPH-dependent deamination of GMP to IMP. It functions in the conversion of nucleobase, nucleoside and nucleotide derivatives of G to A nucleotides, and in maintaining the intracellular balance of A and G nucleotides. The polypeptide is GMP reductase (Aliivibrio fischeri (strain MJ11) (Vibrio fischeri)).